Consider the following 210-residue polypeptide: Large ribosomal subunit protein uL3 (210 aa).

Positions 131-140 (NRASHGNSLS) are enriched in polar residues. Residues 131 to 150 (NRASHGNSLSHRAPGSIGCR) are disordered. At Gln151 the chain carries N5-methylglutamine.

Belongs to the universal ribosomal protein uL3 family. In terms of assembly, part of the 50S ribosomal subunit. Forms a cluster with proteins L14 and L19. Post-translationally, methylated by PrmB.

Its function is as follows. One of the primary rRNA binding proteins, it binds directly near the 3'-end of the 23S rRNA, where it nucleates assembly of the 50S subunit. The protein is Large ribosomal subunit protein uL3 of Acidithiobacillus ferrooxidans (strain ATCC 23270 / DSM 14882 / CIP 104768 / NCIMB 8455) (Ferrobacillus ferrooxidans (strain ATCC 23270)).